Consider the following 500-residue polypeptide: Cysteine--tRNA ligase (500 aa).

Cysteine 30 is a binding site for Zn(2+). Residues 32–42 (PTVYDYAHIGN) carry the 'HIGH' region motif. Zn(2+) is bound by residues cysteine 224, histidine 263, and glutamate 267. The 'KMSKS' region signature appears at 296 to 300 (KMSKS). Lysine 299 contributes to the ATP binding site.

The protein belongs to the class-I aminoacyl-tRNA synthetase family. In terms of assembly, monomer. It depends on Zn(2+) as a cofactor.

It localises to the cytoplasm. The enzyme catalyses tRNA(Cys) + L-cysteine + ATP = L-cysteinyl-tRNA(Cys) + AMP + diphosphate. The polypeptide is Cysteine--tRNA ligase (Bartonella bacilliformis (strain ATCC 35685 / KC583 / Herrer 020/F12,63)).